The following is a 351-amino-acid chain: Regulator of V-ATPase in vacuolar membrane protein 2 (351 aa).

As to quaternary structure, component of the RAVE complex composed of RAV1, RAV2 and CBF3D/SKP1. Within the complex, it interacts directly with RAV1 and CBF3D. Interacts with the V-ATPase V1 subunits VMA1, VMA2 and VMA8.

It is found in the cytoplasm. It localises to the early endosome membrane. Its function is as follows. Component of the RAVE complex, which is required for stable assembly of the vacuolar ATPase complex V-ATPase under many conditions. May be required for transport between the early endosome and the late endosome/prevacuolar compartment (PVC). This is Regulator of V-ATPase in vacuolar membrane protein 2 (RAV2) from Saccharomyces cerevisiae (strain ATCC 204508 / S288c) (Baker's yeast).